Consider the following 428-residue polypeptide: Protein Wnt-8b (428 aa).

The N-terminal stretch at 1 to 22 (MFYTGSFWFIFFILPAIPFCHS) is a signal peptide. The cysteines at positions 54 and 65 are disulfide-linked. 2 N-linked (GlcNAc...) asparagine glycosylation sites follow: N123 and N176. 10 disulfides stabilise this stretch: C177–C185, C187–C205, C253–C267, C255–C262, C329–C367, C345–C360, C364–C406, C382–C397, C384–C394, and C389–C390. S259 carries O-palmitoleoyl serine lipidation. Residue N332 is glycosylated (N-linked (GlcNAc...) asparagine).

The protein belongs to the Wnt family. In terms of processing, palmitoleoylation is required for efficient binding to frizzled receptors. Depalmitoleoylation leads to Wnt signaling pathway inhibition. Proteolytic processing by tiki1 and tiki2 promotes oxidation and formation of large disulfide-bond oligomers, leading to inactivation of wnt8b. In terms of tissue distribution, in adults, in brain.

Its subcellular location is the secreted. The protein localises to the extracellular space. It is found in the extracellular matrix. Ligand for members of the frizzled family of seven transmembrane receptors. Plays a role in the initiation of dorsal axis development. May activate a Nieuwkoop center-like signaling pathway. The sequence is that of Protein Wnt-8b (wnt8b) from Xenopus laevis (African clawed frog).